The chain runs to 237 residues: Large ribosomal subunit protein uL2 (237 aa).

The segment covering 1-11 (MGKRLISQNRG) has biased composition (polar residues). 2 disordered regions span residues 1-26 (MGKR…KRKG) and 204-237 (PYGG…SRRT). Composition is skewed to basic residues over residues 13–26 (GTPK…KRKG) and 228–237 (KVGHIASRRT).

Belongs to the universal ribosomal protein uL2 family. In terms of assembly, part of the 50S ribosomal subunit. Forms a bridge to the 30S subunit in the 70S ribosome.

Its function is as follows. One of the primary rRNA binding proteins. Required for association of the 30S and 50S subunits to form the 70S ribosome, for tRNA binding and peptide bond formation. It has been suggested to have peptidyltransferase activity; this is somewhat controversial. Makes several contacts with the 16S rRNA in the 70S ribosome. In Methanococcus vannielii, this protein is Large ribosomal subunit protein uL2.